The sequence spans 142 residues: Large ribosomal subunit protein uL13 (142 aa).

This sequence belongs to the universal ribosomal protein uL13 family. Part of the 50S ribosomal subunit.

In terms of biological role, this protein is one of the early assembly proteins of the 50S ribosomal subunit, although it is not seen to bind rRNA by itself. It is important during the early stages of 50S assembly. The chain is Large ribosomal subunit protein uL13 from Psychrobacter sp. (strain PRwf-1).